Here is a 334-residue protein sequence, read N- to C-terminus: Trans-O-hydroxybenzylidenepyruvate hydratase-aldolase (334 aa).

It belongs to the DapA family.

It carries out the reaction (3E)-4-(2-hydroxyphenyl)-2-oxobut-3-enoate + H2O = salicylaldehyde + pyruvate. Its pathway is aromatic compound metabolism; naphthalene degradation. Involved in the naphthalene upper catabolic pathway. Catalyzes the transformation of trans-O-hydroxybenzylidenepyruvate (THBPA) to salicylaldehyde and pyruvate. The reaction is reversible. The chain is Trans-O-hydroxybenzylidenepyruvate hydratase-aldolase (pahE) from Pseudomonas aeruginosa.